We begin with the raw amino-acid sequence, 251 residues long: Triosephosphate isomerase (251 aa).

Residue 9-11 (NWK) coordinates substrate. Catalysis depends on His95, which acts as the Electrophile. Glu167 (proton acceptor) is an active-site residue. Residues Gly173, Ser213, and 234 to 235 (GG) each bind substrate. Ser213 is modified (phosphoserine).

Belongs to the triosephosphate isomerase family. As to quaternary structure, homodimer.

It is found in the cytoplasm. It carries out the reaction D-glyceraldehyde 3-phosphate = dihydroxyacetone phosphate. It functions in the pathway carbohydrate biosynthesis; gluconeogenesis. Its pathway is carbohydrate degradation; glycolysis; D-glyceraldehyde 3-phosphate from glycerone phosphate: step 1/1. In terms of biological role, involved in the gluconeogenesis. Catalyzes stereospecifically the conversion of dihydroxyacetone phosphate (DHAP) to D-glyceraldehyde-3-phosphate (G3P). The polypeptide is Triosephosphate isomerase (Bacillus cereus (strain G9842)).